A 433-amino-acid chain; its full sequence is Poly(A) ribonuclease POP2 (433 aa).

N-acetylmethionine is present on Met-1. Positions 78–98 (LLTQQQQQQQQQQQPFNIGTP) are disordered. Residues 81–91 (QQQQQQQQQQQ) show a composition bias toward low complexity. Residue Thr-97 is modified to Phosphothreonine; by YAK1. Residues Ser-188, Glu-190, Asp-310, and Gln-394 each contribute to the a divalent metal cation site.

Belongs to the CAF1 family. In terms of assembly, subunit of the 1.0 MDa CCR4-NOT core complex that contains CCR4, CAF1, NOT1, NOT2, NOT3, NOT4, NOT5, CAF40 and CAF130. In the complex interacts with NOT1. The core complex probably is part of a less characterized 1.9 MDa CCR4-NOT complex. Requires Mg(2+) as cofactor.

It localises to the cytoplasm. Its subcellular location is the nucleus. The enzyme catalyses Exonucleolytic cleavage of poly(A) to 5'-AMP.. Its function is as follows. Acts as a probably catalytic component of the CCR4-NOT core complex, which in the nucleus seems to be a general transcription factor, and in the cytoplasm the major mRNA deadenylase involved in mRNA turnover. In vitro, POP2 has 3'-exoribonuclease activity with a preference for poly(A) RNAs, but also degrades poly(U) and poly(C) RNAs. Is part of a glucose-sensing system involved in growth control in response to glucose availability. The chain is Poly(A) ribonuclease POP2 (POP2) from Saccharomyces cerevisiae (strain ATCC 204508 / S288c) (Baker's yeast).